The primary structure comprises 273 residues: Cyclic di-AMP synthase CdaA (273 aa).

Transmembrane regions (helical) follow at residues 12–32 (LGNA…IMVI), 40–60 (LLKG…LGLS), and 61–81 (TLQW…IIIF). The DAC domain occupies 82-242 (QPELRRALEQ…NGDLHRELTE (161 aa)).

The protein belongs to the adenylate cyclase family. DacA/CdaA subfamily. As to quaternary structure, probably a homodimer. Interacts with CdaR. May interact with GlmM.

Its subcellular location is the cell membrane. It carries out the reaction 2 ATP = 3',3'-c-di-AMP + 2 diphosphate. With respect to regulation, DAC activity is stimulated about 20-fold in E.coli by coexpression with CdaR. Its function is as follows. One of 3 paralogous diadenylate cyclases (DAC) in this bacteria, catalyzing the condensation of 2 ATP molecules into cyclic di-AMP (c-di-AMP). Upon expression in E.coli leads to c-di-AMP synthesis. Probably the main producer of c-di-AMP for the cell; is probably implicated in control of peptidoglycan synthesis. In B.subtilis c-di-AMP is a second messenger that mediates growth, DNA repair and cell wall homeostasis; it is toxic when present in excess. The protein is Cyclic di-AMP synthase CdaA of Bacillus subtilis (strain 168).